The chain runs to 165 residues: MTLSKNSHKEDQLEEKVLVVNRCSKVVKGGRKFSFSALILVGDGKGRLGYGFAKANELTDAIRKGGEAARKNLITIESLEGDSIPHEVLVDQDGAQLLLKPAKPGTGIVAGSRIRLILEMAGVKNIVAKSLGSNNPMNQVKAAFKALLSLSSRKDVLTRRKVTHD.

The S5 DRBM domain maps to 13–76 (LEEKVLVVNR…EAARKNLITI (64 aa)).

The protein belongs to the universal ribosomal protein uS5 family. In terms of assembly, part of the 30S ribosomal subunit. Contacts proteins S4 and S8.

Functionally, with S4 and S12 plays an important role in translational accuracy. In terms of biological role, located at the back of the 30S subunit body where it stabilizes the conformation of the head with respect to the body. The chain is Small ribosomal subunit protein uS5 from Chlamydia abortus (strain DSM 27085 / S26/3) (Chlamydophila abortus).